The sequence spans 110 residues: Large ribosomal subunit protein uL22 (110 aa).

This sequence belongs to the universal ribosomal protein uL22 family. Part of the 50S ribosomal subunit.

Its function is as follows. This protein binds specifically to 23S rRNA; its binding is stimulated by other ribosomal proteins, e.g. L4, L17, and L20. It is important during the early stages of 50S assembly. It makes multiple contacts with different domains of the 23S rRNA in the assembled 50S subunit and ribosome. In terms of biological role, the globular domain of the protein is located near the polypeptide exit tunnel on the outside of the subunit, while an extended beta-hairpin is found that lines the wall of the exit tunnel in the center of the 70S ribosome. This chain is Large ribosomal subunit protein uL22, found in Aggregatibacter actinomycetemcomitans (Actinobacillus actinomycetemcomitans).